A 366-amino-acid polypeptide reads, in one-letter code: Phospho-N-acetylmuramoyl-pentapeptide-transferase (366 aa).

10 consecutive transmembrane segments (helical) span residues 27–47, 71–91, 93–113, 134–154, 174–194, 205–225, 245–265, 268–288, 294–314, and 343–363; these read AAMF…IASL, TPTM…LLWA, LSNV…AIGF, LAIE…AAKI, ALLN…VSAG, GLAI…AYLA, LAVI…FNAP, AIFM…TVAV, IVMV…IIQV, and QVVI…LATL.

This sequence belongs to the glycosyltransferase 4 family. MraY subfamily. Requires Mg(2+) as cofactor.

It is found in the cell inner membrane. The enzyme catalyses UDP-N-acetyl-alpha-D-muramoyl-L-alanyl-gamma-D-glutamyl-meso-2,6-diaminopimeloyl-D-alanyl-D-alanine + di-trans,octa-cis-undecaprenyl phosphate = di-trans,octa-cis-undecaprenyl diphospho-N-acetyl-alpha-D-muramoyl-L-alanyl-D-glutamyl-meso-2,6-diaminopimeloyl-D-alanyl-D-alanine + UMP. The protein operates within cell wall biogenesis; peptidoglycan biosynthesis. Catalyzes the initial step of the lipid cycle reactions in the biosynthesis of the cell wall peptidoglycan: transfers peptidoglycan precursor phospho-MurNAc-pentapeptide from UDP-MurNAc-pentapeptide onto the lipid carrier undecaprenyl phosphate, yielding undecaprenyl-pyrophosphoryl-MurNAc-pentapeptide, known as lipid I. This Allorhizobium ampelinum (strain ATCC BAA-846 / DSM 112012 / S4) (Agrobacterium vitis (strain S4)) protein is Phospho-N-acetylmuramoyl-pentapeptide-transferase.